Here is a 727-residue protein sequence, read N- to C-terminus: YTH domain-containing protein 1 (727 aa).

Over residues 1–12 (MAADSREEKDGE) the composition is skewed to basic and acidic residues. The disordered stretch occupies residues 1-338 (MAADSREEKD…KHEKLSSSVR (338 aa)). Serine 35 carries the phosphoserine modification. Residues 50–59 (DRMESTDTKR) show a composition bias toward basic and acidic residues. Positions 63–90 (SVHSRQLVSKPLSSSVSNNKRIVSTKGK) are enriched in polar residues. Basic and acidic residues predominate over residues 91–115 (SATEYKNEEYQRSERNKRLDADRKI). Residue lysine 96 forms a Glycyl lysine isopeptide (Lys-Gly) (interchain with G-Cter in SUMO2) linkage. 2 positions are modified to phosphoserine: serine 118 and serine 120. Residues 124–144 (EPYKNQPEKTCVRKRDPERRA) are compositionally biased toward basic and acidic residues. A Phosphoserine modification is found at serine 146. At threonine 148 the chain carries Phosphothreonine. 2 stretches are compositionally biased toward basic and acidic residues: residues 151–163 (GSER…DRRA) and 170–185 (SKEE…DHET). Positions 199 to 254 (ENEEEGVEEDVEEDEEVEEDAEEDEEVDEDGEEEEEEEEEEEEEEEEEEEEYEQDE) are enriched in acidic residues. Positions 255 to 270 (RDQKEEGNDYDTRSEA) are enriched in basic and acidic residues. The span at 280 to 289 (FTDGSVRSGS) shows a compositional bias: polar residues. 5 positions are modified to phosphoserine: serine 308, serine 315, serine 317, serine 318, and serine 320. Positions 315–325 (SGSSASESYAG) are enriched in low complexity. Residues 355–492 (ARFFLIKSNN…ECGTQLCLLF (138 aa)) enclose the YTH domain. RNA-binding positions include 361 to 363 (KSN) and 377 to 378 (WS). Serine 424 is subject to Phosphoserine. Tryptophan 428 contacts RNA. A Phosphoserine modification is found at serine 435. An RNA-binding site is contributed by aspartate 476. The segment covering 508 to 523 (RHKRRMHSQPRSRGRP) has biased composition (basic residues). Disordered stretches follow at residues 508–564 (RHKR…PGYL), 607–643 (GMPP…HPVP), and 669–727 (AVVS…RYRR). The span at 524-564 (SRREPVRDVGRRRPEDYDIHNSRKKPRIDYPPEFHQRPGYL) shows a compositional bias: basic and acidic residues. Phosphoserine is present on serine 545. Residues 679-727 (RERDRERERDRPRDNRRDRERDRGRDRERERERLCDRDRDRGERGRYRR) are compositionally biased toward basic and acidic residues.

As to quaternary structure, interacts with SRSF1. Interacts with SRSF2. Interacts with SRSF3. Interacts with SRSF7. Interacts with SRSF10. Interacts with CPSF6. Interacts with KHDRBS1/SAM68. Interacts with TRA2B. Interacts with KHDRBS3. Interacts with EMD. Interacts with RBMX. Interacts with ZCCHC8. Post-translationally, tyrosine phosphorylated.

The protein resides in the nucleus. It localises to the nucleus speckle. In terms of biological role, regulator of alternative splicing that specifically recognizes and binds N6-methyladenosine (m6A)-containing RNAs. M6A is a modification present at internal sites of mRNAs and some non-coding RNAs and plays a role in the efficiency of mRNA splicing, processing and stability. Acts as a key regulator of exon-inclusion or exon-skipping during alternative splicing via interaction with mRNA splicing factors SRSF3 and SRSF10. Specifically binds m6A-containing mRNAs and promotes recruitment of SRSF3 to its mRNA-binding elements adjacent to m6A sites, leading to exon-inclusion during alternative splicing. In contrast, interaction with SRSF3 prevents interaction with SRSF10, a splicing factor that promotes exon skipping: this prevents SRSF10 from binding to its mRNA-binding sites close to m6A-containing regions, leading to inhibit exon skipping during alternative splicing. May also regulate alternative splice site selection. Also involved in nuclear export of m6A-containing mRNAs via interaction with SRSF3: interaction with SRSF3 facilitates m6A-containing mRNA-binding to both SRSF3 and NXF1, promoting mRNA nuclear export. Involved in S-adenosyl-L-methionine homeostasis by regulating expression of MAT2A transcripts, probably by binding m6A-containing MAT2A mRNAs. Also recognizes and binds m6A on other RNA molecules. Involved in random X inactivation mediated by Xist RNA: recognizes and binds m6A-containing Xist and promotes transcription repression activity of Xist. Also recognizes and binds m6A-containing single-stranded DNA. Involved in germline development: required for spermatogonial development in males and oocyte growth and maturation in females, probably via its role in alternative splicing. The polypeptide is YTH domain-containing protein 1 (Homo sapiens (Human)).